The following is a 452-amino-acid chain: Heat shock protein 83 (452 aa).

Arg124 contacts ATP. Residues 448–452 (MEQVD) carry the TPR repeat-binding motif.

It belongs to the heat shock protein 90 family. As to quaternary structure, homodimer.

The protein resides in the cytoplasm. Its function is as follows. Molecular chaperone that promotes the maturation, structural maintenance and proper regulation of specific target proteins involved for instance in cell cycle control and signal transduction. Undergoes a functional cycle that is linked to its ATPase activity. This cycle probably induces conformational changes in the client proteins, thereby causing their activation. Interacts dynamically with various co-chaperones that modulate its substrate recognition, ATPase cycle and chaperone function. The polypeptide is Heat shock protein 83 (HSP83) (Leishmania donovani).